The chain runs to 593 residues: NADH-quinone oxidoreductase subunit C/D (593 aa).

Positions 1 to 184 (MTADSALYIP…DPYSLSAAKQ (184 aa)) are NADH dehydrogenase I subunit C. Positions 208 to 593 (DYMFLNLGPN…IDFVMADVDR (386 aa)) are NADH dehydrogenase I subunit D.

It in the N-terminal section; belongs to the complex I 30 kDa subunit family. The protein in the C-terminal section; belongs to the complex I 49 kDa subunit family. In terms of assembly, NDH-1 is composed of 13 different subunits. Subunits NuoB, CD, E, F, and G constitute the peripheral sector of the complex.

Its subcellular location is the cell inner membrane. The catalysed reaction is a quinone + NADH + 5 H(+)(in) = a quinol + NAD(+) + 4 H(+)(out). Its function is as follows. NDH-1 shuttles electrons from NADH, via FMN and iron-sulfur (Fe-S) centers, to quinones in the respiratory chain. The immediate electron acceptor for the enzyme in this species is believed to be ubiquinone. Couples the redox reaction to proton translocation (for every two electrons transferred, four hydrogen ions are translocated across the cytoplasmic membrane), and thus conserves the redox energy in a proton gradient. In Pseudomonas aeruginosa (strain UCBPP-PA14), this protein is NADH-quinone oxidoreductase subunit C/D.